A 120-amino-acid chain; its full sequence is NAD(P)H-quinone oxidoreductase subunit 3, chloroplastic (120 aa).

The next 3 helical transmembrane spans lie at Ile9 to Gly29, Met64 to Met84, and Val88 to Leu108.

It belongs to the complex I subunit 3 family. NDH is composed of at least 16 different subunits, 5 of which are encoded in the nucleus.

Its subcellular location is the plastid. The protein resides in the chloroplast thylakoid membrane. The catalysed reaction is a plastoquinone + NADH + (n+1) H(+)(in) = a plastoquinol + NAD(+) + n H(+)(out). It carries out the reaction a plastoquinone + NADPH + (n+1) H(+)(in) = a plastoquinol + NADP(+) + n H(+)(out). Its function is as follows. NDH shuttles electrons from NAD(P)H:plastoquinone, via FMN and iron-sulfur (Fe-S) centers, to quinones in the photosynthetic chain and possibly in a chloroplast respiratory chain. The immediate electron acceptor for the enzyme in this species is believed to be plastoquinone. Couples the redox reaction to proton translocation, and thus conserves the redox energy in a proton gradient. This chain is NAD(P)H-quinone oxidoreductase subunit 3, chloroplastic, found in Eucalyptus globulus subsp. globulus (Tasmanian blue gum).